The sequence spans 336 residues: Effector SCP41 (336 aa).

The signal sequence occupies residues 1–19 (MRTETASLLLLAALSVAEE). Disordered stretches follow at residues 59–99 (LFSP…STNN) and 189–230 (PVGN…GQKG). Residues 63-74 (QQQQQQQQQQQQ) are compositionally biased toward low complexity.

As to quaternary structure, interacts with A.thaliana CBP60G; the interaction is direct. Interacts with A.thaliana SARD1. Interacts with G.hirsutum CBP60B.

It localises to the secreted. The protein resides in the host nucleus. Functionally, effector that binds transcription regulators in the host plant to suppress the host's innate immune response. Inhibits the host plant transcription regulators CBP60G and SARD1. The chain is Effector SCP41 from Verticillium dahliae (strain VdLs.17 / ATCC MYA-4575 / FGSC 10137) (Verticillium wilt).